The following is a 463-amino-acid chain: L-seryl-tRNA(Sec) selenium transferase (463 aa).

K295 is subject to N6-(pyridoxal phosphate)lysine.

It belongs to the SelA family. As to quaternary structure, homodecamer; pentamer of dimers. Binds only one seryl-tRNA(Sec) per dimer. Pyridoxal 5'-phosphate is required as a cofactor.

The protein localises to the cytoplasm. The enzyme catalyses L-seryl-tRNA(Sec) + selenophosphate + H(+) = L-selenocysteinyl-tRNA(Sec) + phosphate. It functions in the pathway aminoacyl-tRNA biosynthesis; selenocysteinyl-tRNA(Sec) biosynthesis; selenocysteinyl-tRNA(Sec) from L-seryl-tRNA(Sec) (bacterial route): step 1/1. Its function is as follows. Converts seryl-tRNA(Sec) to selenocysteinyl-tRNA(Sec) required for selenoprotein biosynthesis. This Serratia proteamaculans (strain 568) protein is L-seryl-tRNA(Sec) selenium transferase.